Here is a 465-residue protein sequence, read N- to C-terminus: Myosin-6 (465 aa).

Positions 1–35 (ILERGDALLVVQWNIRAFTGVKKWPWMELYFEIEP) constitute a Myosin motor domain. The stretch at 36-465 (LLKSAEAEKE…YRRKLEEAQR (430 aa)) forms a coiled coil. Phosphoserine is present on residues Ser-285 and Ser-334. Tyr-456 is subject to Phosphotyrosine.

Muscle myosin is a hexameric protein that consists of 2 heavy chain subunits (MHC), 2 alkali light chain subunits (MLC) and 2 regulatory light chain subunits (MLC-2).

The protein localises to the cytoplasm. It is found in the myofibril. Its function is as follows. Muscle contraction. This chain is Myosin-6 (MYH6), found in Oryctolagus cuniculus (Rabbit).